The primary structure comprises 162 residues: Cytochrome B pre-mRNA-processing protein 6 (162 aa).

S2 carries the post-translational modification N-acetylserine. T97 is modified (phosphothreonine).

It is found in the mitochondrion. In terms of biological role, this protein is involved in processing of the 5' terminus and the intervening sequences of cytochrome b pre-mRNA. This Saccharomyces cerevisiae (strain ATCC 204508 / S288c) (Baker's yeast) protein is Cytochrome B pre-mRNA-processing protein 6 (CBP6).